Consider the following 445-residue polypeptide: 2-oxoisovalerate dehydrogenase subunit alpha, mitochondrial (445 aa).

Residues M1–F45 constitute a mitochondrion transit peptide. Residues L33–P52 form a disordered region. Residues Y158 and R159 each coordinate thiamine diphosphate. Residue S206 coordinates K(+). S207 contacts thiamine diphosphate. 3 residues coordinate K(+): P208, T211, and Q212. E238 provides a ligand contact to Mg(2+). Thiamine diphosphate-binding residues include G239, A240, and R265. Mg(2+) contacts are provided by N267 and Y269. H336 lines the thiamine diphosphate pocket. S337 is modified (phosphoserine; by BCKDK). The residue at position 338 (T338) is a Phosphothreonine. 2 positions are modified to phosphoserine: S339 and S347. K356 bears the N6-acetyllysine; alternate mark. K356 carries the N6-succinyllysine; alternate modification. K380 carries the N6-succinyllysine modification.

This sequence belongs to the BCKDHA family. As to quaternary structure, heterotetramer of 2 alpha/BCKDHA and 2 beta chains/BCKDHB that forms the branched-chain alpha-keto acid decarboxylase (E1) component of the BCKD complex. The branched-chain alpha-ketoacid dehydrogenase is a large complex composed of three major building blocks E1, E2 and E3. It is organized around E2, a 24-meric cubic core composed of DBT, to which are associated 6 to 12 copies of E1, and approximately 6 copies of the dehydrogenase E3, a DLD dimer. Interacts with PPM1K. Thiamine diphosphate serves as cofactor. Requires Mg(2+) as cofactor. Post-translationally, phosphorylated at Ser-337 by BCKDK and dephosphorylated by protein phosphatase PPM1K.

It is found in the mitochondrion matrix. The enzyme catalyses N(6)-[(R)-lipoyl]-L-lysyl-[protein] + 3-methyl-2-oxobutanoate + H(+) = N(6)-[(R)-S(8)-2-methylpropanoyldihydrolipoyl]-L-lysyl-[protein] + CO2. In terms of biological role, together with BCKDHB forms the heterotetrameric E1 subunit of the mitochondrial branched-chain alpha-ketoacid dehydrogenase (BCKD) complex. The BCKD complex catalyzes the multi-step oxidative decarboxylation of alpha-ketoacids derived from the branched-chain amino-acids valine, leucine and isoleucine producing CO2 and acyl-CoA which is subsequently utilized to produce energy. The E1 subunit catalyzes the first step with the decarboxylation of the alpha-ketoacid forming an enzyme-product intermediate. A reductive acylation mediated by the lipoylamide cofactor of E2 extracts the acyl group from the E1 active site for the next step of the reaction. This Homo sapiens (Human) protein is 2-oxoisovalerate dehydrogenase subunit alpha, mitochondrial.